The sequence spans 472 residues: Ras-GEF domain-containing family member 1B (472 aa).

One can recognise an N-terminal Ras-GEF domain in the interval 34-164; it reads QDNNLLSGSL…IIQNLIRKLA (131 aa). The 249-residue stretch at 204-452 folds into the Ras-GEF domain; the sequence is DPYTVAQQLT…YLASYESEGP (249 aa).

Guanine nucleotide exchange factor (GEF) with specificity for rap2a and other Ras family proteins (in vitro). The sequence is that of Ras-GEF domain-containing family member 1B (rasgef1b) from Xenopus tropicalis (Western clawed frog).